A 540-amino-acid polypeptide reads, in one-letter code: Light-independent protochlorophyllide reductase subunit B (540 aa).

Asp36 contributes to the [4Fe-4S] cluster binding site. Residue Asp287 is the Proton donor of the active site. 422-423 (GL) contacts substrate.

Belongs to the ChlB/BchB/BchZ family. Protochlorophyllide reductase is composed of three subunits; BchL, BchN and BchB. Forms a heterotetramer of two BchB and two BchN subunits. It depends on [4Fe-4S] cluster as a cofactor.

It catalyses the reaction chlorophyllide a + oxidized 2[4Fe-4S]-[ferredoxin] + 2 ADP + 2 phosphate = protochlorophyllide a + reduced 2[4Fe-4S]-[ferredoxin] + 2 ATP + 2 H2O. It participates in porphyrin-containing compound metabolism; bacteriochlorophyll biosynthesis (light-independent). Functionally, component of the dark-operative protochlorophyllide reductase (DPOR) that uses Mg-ATP and reduced ferredoxin to reduce ring D of protochlorophyllide (Pchlide) to form chlorophyllide a (Chlide). This reaction is light-independent. The NB-protein (BchN-BchB) is the catalytic component of the complex. The chain is Light-independent protochlorophyllide reductase subunit B from Rhodopseudomonas palustris (strain TIE-1).